We begin with the raw amino-acid sequence, 352 residues long: Probable cytosolic iron-sulfur protein assembly protein CIAO1 homolog (352 aa).

WD repeat units lie at residues 14 to 53 (GHDD…PSEQ), 63 to 102 (CHTR…WEQV), 107 to 146 (GHEN…EFEC), 152 to 191 (GHSQ…WGCA), 200 to 240 (GHES…TSTP), 268 to 306 (HHRR…LTQP), and 319 to 352 (AHGA…WWLR).

The protein belongs to the WD repeat CIA1 family.

In terms of biological role, essential component of the cytosolic iron-sulfur (Fe/S) protein assembly machinery. Required for the maturation of extramitochondrial Fe/S proteins. In Chlamydomonas reinhardtii (Chlamydomonas smithii), this protein is Probable cytosolic iron-sulfur protein assembly protein CIAO1 homolog.